The sequence spans 2045 residues: Host cell factor 1 (2045 aa).

The residue at position 2 (Ala2) is an N-acetylalanine. The residue at position 6 (Ser6) is a Phosphoserine. Kelch repeat units lie at residues 44 to 89 (LIVV…GFVC), 93 to 140 (RLLV…RLGH), 148 to 194 (KCYL…ITYG), 217 to 265 (KLVI…TIGN), and 266 to 313 (KMYV…LMDT). Glycyl lysine isopeptide (Lys-Gly) (interchain with G-Cter in ubiquitin) cross-links involve residues Lys105, Lys163, and Lys244. Lys282 participates in a covalent cross-link: Glycyl lysine isopeptide (Lys-Gly) (interchain with G-Cter in SUMO2). At Lys288 the chain carries N6-acetyllysine. Residue Lys363 forms a Glycyl lysine isopeptide (Lys-Gly) (interchain with G-Cter in ubiquitin) linkage. One can recognise a Fibronectin type-III 1 domain in the interval 366 to 457 (PPARVQLVRA…VPQAATAPPS (92 aa)). The segment at 407–434 (ATATSPTPNPVPSVPANPPKSPAPAAAA) is disordered. The residue at position 411 (Ser411) is a Phosphoserine. Over residues 413–428 (TPNPVPSVPANPPKSP) the composition is skewed to pro residues. Residues 500 to 550 (LVTMRPASQAGKAPVTVTSLPASVRMVVPTQSAQGTVIGSNPQMSGMAALA) form a required for interaction with OGT region. Omega-N-methylarginine is present on residues Arg504 and Arg524. Phosphoserine is present on residues Ser598, Ser666, and Ser669. Positions 610–722 (LKTAAAQVGT…KGPLPAGTIL (113 aa)) are interaction with SIN3A. The interval 750–902 (ILGISSVSPS…SLAGAGAHST (153 aa)) is interaction with ZBTB17. N6-acetyllysine is present on Lys813. The interaction with GABP2 stretch occupies residues 813–912 (KIITAVPKIA…SASLATPITT (100 aa)). HCF repeat repeat units lie at residues 1010-1035 (TLVCSNPPCETHETGTTNTATTTVVA), 1072-1097 (VRVCSNPPCETHETGTTNTATTATSN), and 1101-1126 (QHGCSNPPCETHETGTTSTATTAMSS). An HCF repeat 4; degenerate repeat occupies 1157–1182 (VQGTVKPQCQTQQTNMTTTTMTVQAT). Phosphoserine is present on Ser1204. The residue at position 1216 (Arg1216) is an Asymmetric dimethylarginine. Disordered stretches follow at residues 1219 to 1242 (LSGPSSKDMPTGRQPETYHTYTTN), 1302 to 1375 (PCET…TSTG), 1444 to 1475 (TVTSNMSSNQDPPPAASDQGEVASTQGDSTNI), and 1494 to 1525 (TTVTQSTPVPGPSVPPPEELQVSPGPRQQLPP). The residue at position 1223 (Ser1223) is a Phosphoserine. 2 HCF repeat repeats span residues 1295-1320 (TQVCSNPPCETHETGTTNTATTSNAG) and 1323-1348 (QRVCSNPPCETHETGTTHTATTATSN). Residues 1308–1321 (TGTTNTATTSNAGS) show a composition bias toward low complexity. The HCF repeat 7; degenerate repeat unit spans residues 1358 to 1383 (QQPASGHPCETHQTTSTGTTMSVSVG). One copy of the HCF repeat 8 repeat lies at 1423–1448 (QRVCSNPPCETHETGTTHTATTVTSN). At Thr1500 the chain carries Phosphothreonine. Positions 1502–1511 (VPGPSVPPPE) are enriched in pro residues. Phosphoserine occurs at positions 1506, 1516, and 1781. 2 consecutive Fibronectin type-III domains span residues 1808–1898 (PPPP…TCLP) and 1900–2016 (FPGA…TSKD). Residues Lys1817 and Lys1818 each participate in a glycyl lysine isopeptide (Lys-Gly) (interchain with G-Cter in ubiquitin) cross-link. Ser1848 carries the phosphoserine modification. The segment at 2004–2045 (ATQVRWLQETSKDSSGTKPASKRPMSSPEMKSAPKKSKADGQ) is disordered. The residue at position 2015 (Lys2015) is an N6-acetyllysine. Residue Lys2034 forms a Glycyl lysine isopeptide (Lys-Gly) (interchain with G-Cter in SUMO2) linkage.

As to quaternary structure, composed predominantly of six polypeptides ranging from 110 to 150 kDa and a minor 300 kDa polypeptide. The majority of N- and C-terminal cleavage products remain tightly, albeit non-covalently, associated. Interacts with POU2F1, CREB3, ZBTB17, EGR2, E2F4, CREBZF, SP1, GABP2, Sin3 HDAC complex (SIN3A, HDAC1, HDAC2, SUDS3), SAP30, SIN3B and FHL2. Component of a MLL1 complex, composed of at least the core components KMT2A/MLL1, ASH2L, HCFC1, WDR5 and RBBP5, as well as the facultative components BACC1, CHD8, DPY30, E2F6, HCFC2, HSP70, INO80C, KANSL1, LAS1L, MAX, MCRS1, MEN1, MGA, KAT8, PELP1, PHF20, PRP31, RING2, RUVBL1, RUVBL2, SENP3, TAF1, TAF4, TAF6, TAF7, TAF9 and TEX10. Component of a THAP1/THAP3-HCFC1-OGT complex that is required for the regulation of the transcriptional activity of RRM1. Interacts directly with THAP3 (via its HBM). Interacts (via the Kelch-repeat domain) with THAP1 (via the HBM); the interaction recruits HCHC1 to the RRM1. Interacts with THAP7 and THAP11 (via the HMB). Interacts directly with OGT; the interaction, which requires the HCFC1 cleavage site domain, glycosylates and promotes the proteolytic processing of HCFC1 and retains OGT in the nucleus. Component of the SET1 complex, at least composed of the catalytic subunit (SETD1A or SETD1B), WDR5, WDR82, RBBP5, ASH2L, CXXC1, HCFC1 and DPY30. Component of the NSL complex at least composed of MOF/KAT8, KANSL1, KANSL2, KANSL3, MCRS1, PHF20, OGT1/OGT, WDR5 and HCFC1. Component of a complex at least composed of ZNF335, HCFC1, CCAR2, EMSY, MKI67, RBBP5, ASH2L and WDR5; the complex is formed as a result of interactions between components of a nuclear receptor-mediated transcription complex and a histone methylation complex. Within the complex interacts with ZNF335. Interacts with TET2 and TET3. Interacts with HCFC1R1. Interacts with THAP11. Interacts (via Kelch domain) with KMT2E (via HBM motif). Interacts with E2F1. Accessory scaffold component of the polycomb repressive deubiquitinase (PR-DUB) complex, at least composed of BAP1, one of ASXL1, ASXL2 or (probably) ASXL3 and one of MBD5 or MBD6; the PR-DUB core associates with a number of accessory proteins, including FOXK1, FOXK2, KDM1B, HCFC1, YY1 and OGT. Interacts with YY1 (via Gly-rich region); the interaction is direct. Interacts with BAP1 (via HBM-like motif). Post-translationally, proteolytically cleaved at one or several PPCE--THET sites within the HCF repeats. Further cleavage of the primary N- and C-terminal chains results in a 'trimming' and accumulation of the smaller chains. Cleavage is promoted by O-glycosylation. O-glycosylated. GlcNAcylation by OGT promotes proteolytic processing. In terms of processing, ubiquitinated. Lys-1817 and Lys-1818 are ubiquitinated both via 'Lys-48'- and 'Lys-63'-linked polyubiquitin chains. BAP1 mediated deubiquitination of 'Lys-48'-linked polyubiquitin chains; deubiquitination by BAP1 does not seem to stabilize the protein. Expressed in liver, pituitary gland, skeletal muscle, kidney, eye and brain (at protein level). Also observed at low level in heart, spleen and lung.

The protein localises to the nucleus. It localises to the cytoplasm. Its function is as follows. Transcriptional coregulator. Serves as a scaffold protein, bridging interactions between transcription factors, including THAP11 and ZNF143, and transcriptional coregulators. Involved in control of the cell cycle. Also antagonizes transactivation by ZBTB17 and GABP2; represses ZBTB17 activation of the p15(INK4b) promoter and inhibits its ability to recruit p300. Coactivator for EGR2 and GABP2. Tethers the chromatin modifying Set1/Ash2 histone H3 'Lys-4' methyltransferase (H3K4me) and Sin3 histone deacetylase (HDAC) complexes (involved in the activation and repression of transcription respectively) together. As part of the NSL complex it may be involved in acetylation of nucleosomal histone H4 on several lysine residues. Recruits KMT2E to E2F1 responsive promoters promoting transcriptional activation and thereby facilitates G1 to S phase transition. Modulates expression of homeobox protein PDX1, perhaps acting in concert with transcription factor E2F1, thereby regulating pancreatic beta-cell growth and glucose-stimulated insulin secretion. May negatively modulate transcriptional activity of FOXO3. The protein is Host cell factor 1 of Mus musculus (Mouse).